We begin with the raw amino-acid sequence, 295 residues long: Ankyrin repeat and SOCS box protein 17 (295 aa).

One copy of the ANK repeat lies at 146–176 (SGITPLLYVAQTRQSNILKILLQYGILEREN). In terms of domain architecture, SOCS box spans 232-295 (LGRRPIISNW…CLQNYLNLES (64 aa)).

This sequence belongs to the ankyrin SOCS box (ASB) family.

It functions in the pathway protein modification; protein ubiquitination. Functionally, may be a substrate-recognition component of a SCF-like ECS (Elongin-Cullin-SOCS-box protein) E3 ubiquitin-protein ligase complex which mediates the ubiquitination and subsequent proteasomal degradation of target proteins. The sequence is that of Ankyrin repeat and SOCS box protein 17 (ASB17) from Bos taurus (Bovine).